Consider the following 71-residue polypeptide: Brevinin-1V (71 aa).

An N-terminal signal peptide occupies residues 1–22 (MFTLKKSLLLLFFLGTINLSLC). Positions 23 to 45 (EQERDADEEERRDDSEERDIEVE) are excised as a propeptide. Cys-65 and Cys-71 are disulfide-bonded.

This sequence belongs to the frog skin active peptide (FSAP) family. Brevinin subfamily. Expressed by the skin glands.

Its subcellular location is the secreted. Has antimicrobial activity against Gram-positive bacteria and fungi but has weak or no activity against a range of Gram-negative bacteria except P.faecalis. Active against the Gram-positive bacteria E.faecium 091299 (MIC=37.5 uM), S.aureus ATCC 25923 (MIC=2.4 uM), S.carnosus KHS (MIC=19 uM), B.licheniformis X39 (MIC=2.4 uM) and R.rhodochrous X15 (MIC=1.2 uM) and a lower activity against E.faecalis 981 (MIC=75 uM). Active against the Gram-negative bacterium P.faecalis X29 (MIC=9.5 uM) is virtually inactive against E.coli ATCC 25922 (MIC=150 uM), and inactive against P.aeruginosa and S.typhi. Has antifungal activity against C.albicans ATCC 2002 (MIC=9.5 uM) and is also active against the slime mold 090223 (MIC=1.2 uM). Has low hemolytic activity against human erythrocytes (LC(50)=75 uM). This Odorrana hainanensis (Odor frog) protein is Brevinin-1V.